The chain runs to 737 residues: tRNA (guanine(27)-N(2))-dimethyltransferase (737 aa).

Residues 1–10 (MENMAEEELL) are compositionally biased toward acidic residues. Positions 1–65 (MENMAEEELL…ASAPVPAPAL (65 aa)) are disordered. Residues 17 to 49 (VVQVPVPTPTPDSARVPAPAPDSAPVSASTPAP) are compositionally biased toward low complexity. At Thr-24 the chain carries Phosphothreonine. Over residues 50 to 62 (ASAPTPASAPVPA) the composition is skewed to pro residues. A Phosphoserine modification is found at Ser-72. The Nucleolar localization signal motif lies at 141 to 145 (HKLHR). The segment at 190–212 (YHCIICSATITRRTDMLGHVRRH) adopts a C2H2-type zinc-finger fold. A Trm1 methyltransferase domain is found at 233–692 (EILKEADTDV…APLMQFKSIL (460 aa)). S-adenosyl-L-methionine is bound by residues Arg-266, Asp-313, Asp-363, and Ala-364. Zn(2+) contacts are provided by Cys-494, Cys-497, Cys-519, and Cys-521. Lys-589 participates in a covalent cross-link: Glycyl lysine isopeptide (Lys-Gly) (interchain with G-Cter in SUMO2). Ser-616 bears the Phosphoserine mark.

It belongs to the class I-like SAM-binding methyltransferase superfamily. Trm1 family.

The protein resides in the nucleus. It is found in the nucleolus. The catalysed reaction is guanosine(27) in tRNA(Tyr) + 2 S-adenosyl-L-methionine = N(2)-dimethylguanosine(27) in tRNA(Tyr) + 2 S-adenosyl-L-homocysteine + 2 H(+). Specifically dimethylates a single guanine residue at position 27 of tRNA(Tyr) using S-adenosyl-L-methionine as donor of the methyl groups. Dimethylation at position 27 of tRNA(Tyr) is required for efficient translation of tyrosine codons. Also required to maintain 3-(3-amino-3-carboxypropyl)uridine (acp3U) in the D-loop of several cytoplasmic tRNAs. This chain is tRNA (guanine(27)-N(2))-dimethyltransferase (TRMT1L), found in Bos taurus (Bovine).